Here is a 1079-residue protein sequence, read N- to C-terminus: Eukaryotic translation initiation factor 5B (1079 aa).

A disordered region spans residues 1-478 (MGKKGKKSGY…QAAPAESNVS (478 aa)). The span at 22 to 38 (SGQNEYLDNTSQDSPQN) shows a compositional bias: polar residues. A compositionally biased stretch (basic residues) spans 57 to 67 (SKKKKGKKNKG). Phosphoserine is present on residues Ser-73, Ser-77, and Ser-82. Residues 105–114 (KKGKKGKKSK) show a composition bias toward basic residues. A Phosphoserine modification is found at Ser-127. The span at 160-169 (NNNESEAAAP) shows a compositional bias: low complexity. Over residues 173 to 192 (PEVRVKTKKEKEREKKEREK) the composition is skewed to basic and acidic residues. The span at 193-204 (LRKKQQQAKKKG) shows a compositional bias: basic residues. Residues 207–233 (GEDTLASSEVSSEVDISTPAENDSSAK) show a composition bias toward polar residues. The segment covering 253 to 293 (MLEEKRAREEEEQRIREEEARIAEEEKRLAEVEEARKEEAR) has biased composition (basic and acidic residues). Low complexity-rich tracts occupy residues 321–334 (QQALAQRRLQQMLE) and 361–376 (RSGTSSISSSGILESS). Phosphothreonine is present on Thr-364. Residues 385–408 (EPQKDSKDDSEKVEKETEVERKEE) show a composition bias toward basic and acidic residues. The span at 409–431 (NEAEAEAVFDDWEAALEEPEVAE) shows a compositional bias: acidic residues. Over residues 436-466 (VTEKKETDIKSDAVEHSIKDKEDSKTDKVDD) the composition is skewed to basic and acidic residues. Residues 482–700 (LRSPICCILG…LISLTQTRMS (219 aa)) form the tr-type G domain. The interval 491–498 (GHVDTGKT) is G1. 491-498 (GHVDTGKT) is a binding site for GTP. The tract at residues 516-520 (GITQQ) is G2. Residues 555–558 (DTPG) are G3. Residues 609 to 612 (NKVD) are G4. The G5 stretch occupies residues 677-679 (SAQ).

This sequence belongs to the TRAFAC class translation factor GTPase superfamily. Classic translation factor GTPase family. IF-2 subfamily. A monovalent cation is required as a cofactor.

Its subcellular location is the cytoplasm. The enzyme catalyses GTP + H2O = GDP + phosphate + H(+). Functionally, plays a role in translation initiation. Translational GTPase that catalyzes the joining of the 40S and 60S subunits to form the 80S initiation complex with the initiator methionine-tRNA in the P-site base paired to the start codon. GTP binding and hydrolysis induces conformational changes in the enzyme that renders it active for productive interactions with the ribosome. The release of the enzyme after formation of the initiation complex is a prerequisite to form elongation-competent ribosomes. This is Eukaryotic translation initiation factor 5B from Schizosaccharomyces pombe (strain 972 / ATCC 24843) (Fission yeast).